A 132-amino-acid polypeptide reads, in one-letter code: Glycine cleavage system H protein (132 aa).

The 83-residue stretch at 24 to 106 (TVRVGITDFA…YGAGWLLDVQ (83 aa)) folds into the Lipoyl-binding domain. The residue at position 65 (Lys65) is an N6-lipoyllysine.

The protein belongs to the GcvH family. The glycine cleavage system is composed of four proteins: P, T, L and H. (R)-lipoate serves as cofactor.

In terms of biological role, the glycine cleavage system catalyzes the degradation of glycine. The H protein shuttles the methylamine group of glycine from the P protein to the T protein. This Mycobacterium avium (strain 104) protein is Glycine cleavage system H protein.